We begin with the raw amino-acid sequence, 208 residues long: Uracil phosphoribosyltransferase (208 aa).

Residues arginine 78, arginine 103, and 130-138 (DPMLATGGS) contribute to the 5-phospho-alpha-D-ribose 1-diphosphate site. Uracil-binding positions include isoleucine 193 and 198 to 200 (GDA). Aspartate 199 is a 5-phospho-alpha-D-ribose 1-diphosphate binding site.

The protein belongs to the UPRTase family. Mg(2+) serves as cofactor.

It carries out the reaction UMP + diphosphate = 5-phospho-alpha-D-ribose 1-diphosphate + uracil. The protein operates within pyrimidine metabolism; UMP biosynthesis via salvage pathway; UMP from uracil: step 1/1. With respect to regulation, allosterically activated by GTP. Catalyzes the conversion of uracil and 5-phospho-alpha-D-ribose 1-diphosphate (PRPP) to UMP and diphosphate. The protein is Uracil phosphoribosyltransferase of Vibrio parahaemolyticus serotype O3:K6 (strain RIMD 2210633).